Reading from the N-terminus, the 462-residue chain is Glycine--tRNA ligase (462 aa).

The substrate site is built by Arg-98 and Glu-174. Residues 206–208 (RNE), 216–221 (FRTREF), 290–291 (EL), and 334–337 (GADR) each bind ATP. Residue 221–225 (FEQME) coordinates substrate. 330–334 (EPSLG) contributes to the substrate binding site.

Belongs to the class-II aminoacyl-tRNA synthetase family. As to quaternary structure, homodimer.

The protein localises to the cytoplasm. The catalysed reaction is tRNA(Gly) + glycine + ATP = glycyl-tRNA(Gly) + AMP + diphosphate. Its function is as follows. Catalyzes the attachment of glycine to tRNA(Gly). This is Glycine--tRNA ligase from Lachnoclostridium phytofermentans (strain ATCC 700394 / DSM 18823 / ISDg) (Clostridium phytofermentans).